The chain runs to 377 residues: Chaperone protein DnaJ (377 aa).

The region spanning 5 to 70 (DFYEVLGVDR…EKRSAYDRMG (66 aa)) is the J domain. The CR-type zinc-finger motif lies at 136–214 (GCKKEISFTA…CHGTGVKDKS (79 aa)). Zn(2+)-binding residues include Cys149, Cys152, Cys166, Cys169, Cys188, Cys191, Cys202, and Cys205. CXXCXGXG motif repeat units follow at residues 149-156 (CETCDGKG), 166-173 (CSTCGGHG), 188-195 (CPNCGGSG), and 202-209 (CNDCHGTG). The segment at 353–377 (LDGDSKHHQSPKKKSFFEKLGDLFD) is disordered. A compositionally biased stretch (basic and acidic residues) spans 367-377 (SFFEKLGDLFD).

Belongs to the DnaJ family. As to quaternary structure, homodimer. It depends on Zn(2+) as a cofactor.

It localises to the cytoplasm. In terms of biological role, participates actively in the response to hyperosmotic and heat shock by preventing the aggregation of stress-denatured proteins and by disaggregating proteins, also in an autonomous, DnaK-independent fashion. Unfolded proteins bind initially to DnaJ; upon interaction with the DnaJ-bound protein, DnaK hydrolyzes its bound ATP, resulting in the formation of a stable complex. GrpE releases ADP from DnaK; ATP binding to DnaK triggers the release of the substrate protein, thus completing the reaction cycle. Several rounds of ATP-dependent interactions between DnaJ, DnaK and GrpE are required for fully efficient folding. Also involved, together with DnaK and GrpE, in the DNA replication of plasmids through activation of initiation proteins. The sequence is that of Chaperone protein DnaJ from Psychrobacter sp. (strain PRwf-1).